The following is an 86-amino-acid chain: Small ribosomal subunit protein uS17 (86 aa).

It belongs to the universal ribosomal protein uS17 family. Part of the 30S ribosomal subunit.

In terms of biological role, one of the primary rRNA binding proteins, it binds specifically to the 5'-end of 16S ribosomal RNA. The chain is Small ribosomal subunit protein uS17 from Chlamydia pneumoniae (Chlamydophila pneumoniae).